The sequence spans 330 residues: NmrA-like family domain-containing oxidoreductase notO (330 aa).

Residues 12 to 17 (VGIGSL), 38 to 42 (HHFAQ), 59 to 60 (RS), 80 to 82 (IEA), and 160 to 163 (LGGG) contribute to the NADP(+) site. Residues 12–32 (VGIGSLPAGLVALFMGATSGI) form a helical membrane-spanning segment. The interaction with ASS1 stretch occupies residues 158–202 (SVLGGGLESPLNEQDLDLRDPKNWTFWSSSMHSGTMGTLTLERIA). Residues Asn180 and Asn207 are each glycosylated (N-linked (GlcNAc...) asparagine).

Belongs to the NmrA-type oxidoreductase family.

Its subcellular location is the membrane. Functionally, nmrA-like family domain-containing oxidoreductase; part of the gene cluster that mediates the biosynthesis of notoamide, a fungal indole alkaloid that belongs to a family of natural products containing a characteristic bicyclo[2.2.2]diazaoctane core. The first step of notoamide biosynthesis involves coupling of L-proline and L-tryptophan by the bimodular NRPS notE, to produce cyclo-L-tryptophan-L-proline called brevianamide F. The reverse prenyltransferase notF then acts as a deoxybrevianamide E synthase and converts brevianamide F to deoxybrevianamide E via reverse prenylation at C-2 of the indole ring leading to the bicyclo[2.2.2]diazaoctane core. Deoxybrevianamide E is further hydroxylated at C-6 of the indole ring, likely catalyzed by the cytochrome P450 monooxygenase notG, to yield 6-hydroxy-deoxybrevianamide E. 6-hydroxy-deoxybrevianamide E is a specific substrate of the prenyltransferase notC for normal prenylation at C-7 to produce 6-hydroxy-7-prenyl-deoxybrevianamide, also called notoamide S. As the proposed pivotal branching point in notoamide biosynthesis, notoamide S can be diverted to notoamide E through an oxidative pyran ring closure putatively catalyzed by either notH cytochrome P450 monooxygenase or the notD FAD-linked oxidoreductase. This step would be followed by an indole 2,3-epoxidation-initiated pinacol-like rearrangement catalyzed by the notB FAD-dependent monooxygenase leading to the formation of notoamide C and notoamide D. On the other hand notoamide S is converted to notoamide T by notH (or notD), a bifunctional oxidase that also functions as the intramolecular Diels-Alderase responsible for generation of (+)-notoamide T. To generate antipodal (-)-notoaminide T, notH' (or notD') in Aspergillus versicolor is expected to catalyze a Diels-Alder reaction leading to the opposite stereochemistry. The remaining oxidoreductase notD (or notH) likely catalyzes the oxidative pyran ring formation to yield (+)-stephacidin A. The FAD-dependent monooxygenase notI is highly similar to notB and is predicted to catalyze a similar conversion from (+)-stephacidin A to (-)-notoamide B via the 2,3-epoxidation of (+)-stephacidin A followed by a pinacol-type rearrangement. Finally, it remains unclear which enzyme could be responsible for the final hydroxylation steps leading to notoamide A and sclerotiamide. The function of notO in the notoamide biosynthesis has not been determined yet. The protein is NmrA-like family domain-containing oxidoreductase notO of Aspergillus sp. (strain MF297-2).